The sequence spans 124 residues: Small ribosomal subunit protein uS12 (124 aa).

Asp89 carries the 3-methylthioaspartic acid modification.

Belongs to the universal ribosomal protein uS12 family. In terms of assembly, part of the 30S ribosomal subunit. Contacts proteins S8 and S17. May interact with IF1 in the 30S initiation complex.

Functionally, with S4 and S5 plays an important role in translational accuracy. Interacts with and stabilizes bases of the 16S rRNA that are involved in tRNA selection in the A site and with the mRNA backbone. Located at the interface of the 30S and 50S subunits, it traverses the body of the 30S subunit contacting proteins on the other side and probably holding the rRNA structure together. The combined cluster of proteins S8, S12 and S17 appears to hold together the shoulder and platform of the 30S subunit. This Shewanella halifaxensis (strain HAW-EB4) protein is Small ribosomal subunit protein uS12.